A 384-amino-acid chain; its full sequence is ATP phosphoribosyltransferase regulatory subunit (384 aa).

It belongs to the class-II aminoacyl-tRNA synthetase family. HisZ subfamily. As to quaternary structure, heteromultimer composed of HisG and HisZ subunits.

The protein localises to the cytoplasm. It participates in amino-acid biosynthesis; L-histidine biosynthesis; L-histidine from 5-phospho-alpha-D-ribose 1-diphosphate: step 1/9. Functionally, required for the first step of histidine biosynthesis. May allow the feedback regulation of ATP phosphoribosyltransferase activity by histidine. The sequence is that of ATP phosphoribosyltransferase regulatory subunit from Paracidovorax citrulli (strain AAC00-1) (Acidovorax citrulli).